We begin with the raw amino-acid sequence, 284 residues long: Small ribosomal subunit protein uS2 (284 aa).

Low complexity predominate over residues Q250–A272. A disordered region spans residues Q250–P284.

It belongs to the universal ribosomal protein uS2 family.

The chain is Small ribosomal subunit protein uS2 from Mycobacterium sp. (strain KMS).